The following is a 396-amino-acid chain: SSTETPPSYNQLNYNENLLRFFNSKPVTAPVELDPPKVESSYVSSARGEDARSTLSPVQGFEGSGGSGSSGNFTTGSNLHMSSVTNTSNAGTGTSGTGNSGDGGGGGGANGTGSGAAPPVTLTESLLNKHNDEMEKFMLKKHRESRGRSGEKNKKSANEAMKMLEYSGPGPGHGHGIKRGGSHSWEGEANKPKQQLTLNTSGGGGGVGVGGGMPLFLDITHASSSSQNKGLAGVGVGGAGGVVGGGGSGTGLGGNGNVGSGNGNNNQPSTNQYTQSRLPCTQNINLWPPFSVGITTPTSVLSSHTAVPPSSFSPQHSLFPTFYYIPASIAASSPSSTNTNPNRPHKHAHVHNSSEKPSTSQAAAATMPLQYMTGVMYPHPSLFYTHPAAAAATAMV.

Disordered regions lie at residues V27–V120, L164–E188, G253–Y273, and S333–A362. A compositionally biased stretch (gly residues) spans G93–S114. Residues G253–N262 show a composition bias toward gly residues. Low complexity predominate over residues S333–N342.

In terms of assembly, forms a heterodimer with timeless (TIM); the complex then translocates into the nucleus. Post-translationally, phosphorylated with a circadian rhythmicity, probably by the double-time protein (dbt). Phosphorylation could be implicated in the stability of per monomer and in the formation of heterodimer per-tim.

The protein localises to the nucleus. Its subcellular location is the cytoplasm. It localises to the perinuclear region. Its function is as follows. Essential for biological clock functions. Determines the period length of circadian and ultradian rhythms; an increase in PER dosage leads to shortened circadian rhythms and a decrease leads to lengthened circadian rhythms. Essential for the circadian rhythmicity of locomotor activity, eclosion behavior, and for the rhythmic component of the male courtship song that originates in the thoracic nervous system. The biological cycle depends on the rhythmic formation and nuclear localization of the TIM-PER complex. Light induces the degradation of TIM, which promotes elimination of PER. Nuclear activity of the heterodimer coordinatively regulates PER and TIM transcription through a negative feedback loop. Behaves as a negative element in circadian transcriptional loop. Does not appear to bind DNA, suggesting indirect transcriptional inhibition. In Drosophila pavlovskiana (Fruit fly), this protein is Period circadian protein (per).